A 601-amino-acid chain; its full sequence is Elongation factor 4 (601 aa).

Residues 6–188 (SHIRNFSIIA…QIVHRVPAPE (183 aa)) enclose the tr-type G domain. GTP contacts are provided by residues 18–23 (DHGKST) and 135–138 (NKID).

It belongs to the TRAFAC class translation factor GTPase superfamily. Classic translation factor GTPase family. LepA subfamily.

Its subcellular location is the cell inner membrane. It carries out the reaction GTP + H2O = GDP + phosphate + H(+). Functionally, required for accurate and efficient protein synthesis under certain stress conditions. May act as a fidelity factor of the translation reaction, by catalyzing a one-codon backward translocation of tRNAs on improperly translocated ribosomes. Back-translocation proceeds from a post-translocation (POST) complex to a pre-translocation (PRE) complex, thus giving elongation factor G a second chance to translocate the tRNAs correctly. Binds to ribosomes in a GTP-dependent manner. The polypeptide is Elongation factor 4 (Anaeromyxobacter sp. (strain K)).